The primary structure comprises 2801 residues: Neurobeachin-like protein 2 (2801 aa).

The disordered stretch occupies residues 1379-1529; that stretch reads RHEEEYEEEE…TISNTSNPQA (151 aa). Residues 1383 to 1393 are compositionally biased toward acidic residues; it reads EYEEEEGETQD. Composition is skewed to polar residues over residues 1400–1413, 1424–1437, 1470–1481, and 1500–1528; these read DLSQSPPSTGQLKN, GDQSSHSSTLSNTV, KGPQTPVGSQPE, and SSSLSNVLDDTSYSTEPPTDTISNTSNPQ. A BEACH-type PH domain is found at 1986-2086; it reads SQKEKLVLSE…VRNKVYSRIL (101 aa). The region spanning 2099 to 2391 is the BEACH domain; sequence RSPQELLKAS…QLLKEPHPPR (293 aa). WD repeat units follow at residues 2431-2468, 2492-2535, 2538-2575, 2588-2626, 2633-2676, 2684-2719, and 2727-2762; these read LVQAVVPRNQTRSFIIPGSDILVTVSANGMIGTHSWLP, RFLS…MLGK, LVGRICRHIDVVTCLALDLCGIYLISGSRDTTCMVWQV, RPIQVLCGHDQEVTCVAISTELDMAISGSKDGTVIVHSV, WTLR…RYAL, TLLASETLDEKISALYLVPDYLIVGTQQGNLHIRDL, and APLALKVPVRCVSVTKESSHILVGLEDGKLIVVGAG.

It belongs to the WD repeat neurobeachin family.

Its subcellular location is the endoplasmic reticulum. Its function is as follows. Involved in thrombopoiesis. Plays a role in the development or secretion of alpha-granules, that contain several growth factors important for platelet biogenesis. The protein is Neurobeachin-like protein 2 (nbeal2) of Danio rerio (Zebrafish).